The chain runs to 375 residues: Alcohol dehydrogenase 1 (375 aa).

Residue S2 is modified to N-acetylserine. Zn(2+) contacts are provided by C47, H68, C98, C101, C104, C112, and C175. Residues 200–205 (GLGGVG), D224, and K229 each bind NAD(+). K234 carries the N6-succinyllysine modification. 293–295 (VGV) lines the NAD(+) pocket. K340 carries the N6-succinyllysine modification. R370 is an NAD(+) binding site.

Belongs to the zinc-containing alcohol dehydrogenase family. Class-I subfamily. Zn(2+) is required as a cofactor.

It localises to the cytoplasm. It catalyses the reaction a primary alcohol + NAD(+) = an aldehyde + NADH + H(+). The enzyme catalyses a secondary alcohol + NAD(+) = a ketone + NADH + H(+). This chain is Alcohol dehydrogenase 1 (ADH1), found in Peromyscus maniculatus (North American deer mouse).